A 141-amino-acid polypeptide reads, in one-letter code: Large ribosomal subunit protein uL16 (141 aa).

The tract at residues 1–23 is disordered; the sequence is MLMPKRTKYRKQMKGRNRGKAHR.

It belongs to the universal ribosomal protein uL16 family. As to quaternary structure, part of the 50S ribosomal subunit.

Functionally, binds 23S rRNA and is also seen to make contacts with the A and possibly P site tRNAs. This Helicobacter acinonychis (strain Sheeba) protein is Large ribosomal subunit protein uL16.